A 180-amino-acid chain; its full sequence is ATP-dependent protease subunit HslV (180 aa).

Residue T7 is part of the active site. 3 residues coordinate Na(+): A164, C167, and T170.

This sequence belongs to the peptidase T1B family. HslV subfamily. A double ring-shaped homohexamer of HslV is capped on each side by a ring-shaped HslU homohexamer. The assembly of the HslU/HslV complex is dependent on binding of ATP.

The protein localises to the cytoplasm. It catalyses the reaction ATP-dependent cleavage of peptide bonds with broad specificity.. With respect to regulation, allosterically activated by HslU binding. Protease subunit of a proteasome-like degradation complex believed to be a general protein degrading machinery. In Brevibacillus brevis (strain 47 / JCM 6285 / NBRC 100599), this protein is ATP-dependent protease subunit HslV.